Reading from the N-terminus, the 385-residue chain is MSLILNILREMLEYFGVPVEQVLLIWENKDYGSTRSIVRIIGKMLPLEPCRRPNFELIPLLNSVDSDNCGSMVPSFADILYVANDEEASYLRFRNSIWKNEEEKVEIFHPLRLVRDPLSPAVRQKETVKNDLPVNEAAIRKIAALENELTFLRSQIAAIVEMQELKNSTNSSSFGLSDERISLGQLSSSRAAHLSVDPDQLPGSVLSPPPPPPLPPQFSSLQPPCFPPVQPGSNNICDSDNPATEMSKQNPAANKTNYSHHSKSQRNKDIPNMLDVLKDMNKVKLRAIERSPGGRPIHKRKRQNSHWDPVSLISHALKQKFAFQEDDSFEKENRSWESSPFSSPETSRFGHHISQSEGQRTKEEMVNTKAVDQGISNTSLLNSRI.

Residue S2 is modified to N-acetylserine. S119 is modified (phosphoserine). A disordered region spans residues 195-268 (SVDPDQLPGS…SHHSKSQRNK (74 aa)). Pro residues predominate over residues 207 to 216 (SPPPPPPLPP). Positions 231-257 (PGSNNICDSDNPATEMSKQNPAANKTN) are enriched in polar residues. Phosphoserine is present on residues S291 and S328. Residues 331-363 (KENRSWESSPFSSPETSRFGHHISQSEGQRTKE) are disordered. Residues 336–346 (WESSPFSSPET) are compositionally biased toward polar residues.

This sequence belongs to the MTFR1 family.

Its subcellular location is the mitochondrion. In terms of biological role, may play a role in mitochondrial aerobic respiration essentially in the testis. Can also promote mitochondrial fission. The chain is Mitochondrial fission regulator 2 (MTFR2) from Homo sapiens (Human).